The chain runs to 572 residues: Frizzled-7 (572 aa).

The N-terminal stretch at 1-32 (MRGPGTAASHSPLGLCALVLALLGALPTDTRA) is a signal peptide. Over 33–254 (QPYHGEKGIS…EEERRFARLW (222 aa)) the chain is Extracellular. The FZ domain occupies 44 to 163 (PDHGFCQPIS…HGAGEICVGQ (120 aa)). 5 disulfide bridges follow: Cys49–Cys110, Cys57–Cys103, Cys94–Cys131, Cys120–Cys160, and Cys124–Cys148. Asn63 is a glycosylation site (N-linked (GlcNAc...) asparagine). N-linked (GlcNAc...) asparagine glycosylation is present at Asn164. A helical transmembrane segment spans residues 255–275 (VGVWSVLCCASTLFTVLTYLV). Residues 276 to 286 (DMRRFSYPERP) lie on the Cytoplasmic side of the membrane. Residues 287–307 (IIFLSGCYFMVAVAHVAGFLL) form a helical membrane-spanning segment. Residues 308 to 334 (EDRAVCVERFSDDGYRTVAQGTKKEGC) are Extracellular-facing. Residues 335–355 (TILFMVLYFFGMASSIWWVIL) traverse the membrane as a helical segment. The Cytoplasmic segment spans residues 356-377 (SLTWFLAAGMKWGHEAIEANSQ). The chain crosses the membrane as a helical span at residues 378–398 (YFHLAAWAVPAVKTITILAMG). The Extracellular portion of the chain corresponds to 399 to 421 (QVDGDLLSGVCYVGLSSVDALRG). The chain crosses the membrane as a helical span at residues 422-442 (FVLAPLFVYLFIGTSFLLAGF). The Cytoplasmic segment spans residues 443–468 (VSLFRIRTIMKHDGTKTEKLEKLMVR). The chain crosses the membrane as a helical span at residues 469–489 (IGVFSVLYTVPATIVLACYFY). Over 490–526 (EQAFREHWERTWLLQTCKSYAVPCPPGHFSPMSPDFT) the chain is Extracellular. The helical transmembrane segment at 527 to 547 (VFMIKYLMTMIVGITTGFWIW) threads the bilayer. Residues 548–572 (SGKTLQSWRRFYHRLSHSSKGETAV) lie on the Cytoplasmic side of the membrane. The short motif at 550–555 (KTLQSW) is the Lys-Thr-X-X-X-Trp motif, mediates interaction with the PDZ domain of Dvl family members element. Residues 570–572 (TAV) carry the PDZ-binding motif.

Belongs to the G-protein coupled receptor Fz/Smo family. Interacts with MAGI3. Interacts with DVL1. Interacts with CCDC88C/DAPLE; the interaction displaces DVL1 from FZD7, leading to inhibition of canonical Wnt signaling and triggering of non-canonical Wnt responses. Interacts with MYOC. Binds to SDCBP; this interaction is increased by inositol trisphosphate (IP3). Interacts with glypican GPC3. Post-translationally, ubiquitinated by ZNRF3, leading to its degradation by the proteasome.

It is found in the cell membrane. Its subcellular location is the endosome membrane. Functionally, receptor for Wnt proteins. Most frizzled receptors are coupled to the beta-catenin canonical signaling pathway, which leads to the activation of disheveled proteins, inhibition of GSK-3 kinase, nuclear accumulation of beta-catenin and activation of Wnt target genes. A second signaling pathway involving PKC and calcium fluxes has been seen for some family members, but it is not yet clear if it represents a distinct pathway or if it can be integrated in the canonical pathway, as PKC seems to be required for Wnt-mediated inactivation of GSK-3 kinase. Both pathways seem to involve interactions with G-proteins. Activation by WNT8 induces expression of beta-catenin target genes. Following ligand activation, binds to CCDC88C/DAPLE which displaces DVL1 from FZD7 and leads to inhibition of canonical Wnt signaling, activation of G-proteins by CCDC88C and triggering of non-canonical Wnt responses. May be involved in transduction and intercellular transmission of polarity information during tissue morphogenesis and/or in differentiated tissues. In Mus musculus (Mouse), this protein is Frizzled-7 (Fzd7).